The following is a 443-amino-acid chain: Sulfoquinovose isomerase (443 aa).

Belongs to the SqvD family.

The enzyme catalyses 6-sulfo-beta-D-quinovose = 6-deoxy-6-sulfo-D-fructose. Its function is as follows. Part of the sulfo-EMP2 pathway, a D-sulfoquinovose degradation pathway that produces sulfolactate (SL). Catalyzes the isomerization of sulfoquinovose (SQ) to 6-deoxy-6-sulfo-D-fructose (SF). The protein is Sulfoquinovose isomerase of Alkalicoccus urumqiensis (Bacillus urumqiensis).